The following is a 245-amino-acid chain: Ribosomal RNA large subunit methyltransferase E (245 aa).

The tract at residues 1-25 is disordered; that stretch reads MTKSPIGGNRSGRKLGQKVKKGKLK. The segment covering 11–25 has biased composition (basic residues); it reads SGRKLGQKVKKGKLK. Residues Gly-81, Trp-83, Asp-104, Asp-120, and Asp-144 each coordinate S-adenosyl-L-methionine. The Proton acceptor role is filled by Lys-184.

Belongs to the class I-like SAM-binding methyltransferase superfamily. RNA methyltransferase RlmE family.

The protein resides in the cytoplasm. The enzyme catalyses uridine(2552) in 23S rRNA + S-adenosyl-L-methionine = 2'-O-methyluridine(2552) in 23S rRNA + S-adenosyl-L-homocysteine + H(+). Functionally, specifically methylates the uridine in position 2552 of 23S rRNA at the 2'-O position of the ribose in the fully assembled 50S ribosomal subunit. The chain is Ribosomal RNA large subunit methyltransferase E from Rhizobium meliloti (strain 1021) (Ensifer meliloti).